A 394-amino-acid polypeptide reads, in one-letter code: MSKEKFQRVKPHINVGTIGHVDHGKTTLTAAITTVLSKKYGGSARAFDQIDNAPEEKARGITINTSHVEYDTELRHYAHVDCPGHADYIKNMITGAAQMDGAILVVAATDGPMPQTREHILLGRQVGVPYIIVFLNKCDMVDDEELLELVEMEVRDLLTQYDFPGDDTPIIRGSALKALEGDADWESKILDLSKFLDTYIPEPKRAIDQPFLLPIEDVFSISGRGTVVTGRVERGIVKVGEEVEIVGIKKTTKTTCTGVEMFRKLLDEGRAGENVGVLLRGTKRDEIERGQVLAKPGSIHPHTTFESEVYVLSKEEGGRHTPFFKGYRPQFYFRTTDVTGSIELPEGVEMVMPGDNIKMTVTLIHPIAMADGLRFAIREGGRTVGAGVVSKVLV.

The region spanning 10–204 is the tr-type G domain; sequence KPHINVGTIG…FLDTYIPEPK (195 aa). Residues 19 to 26 are G1; sequence GHVDHGKT. 19–26 provides a ligand contact to GTP; that stretch reads GHVDHGKT. T26 is a Mg(2+) binding site. The tract at residues 60–64 is G2; sequence GITIN. The segment at 81–84 is G3; the sequence is DCPG. Residues 81–85 and 136–139 each bind GTP; these read DCPGH and NKCD. Positions 136 to 139 are G4; that stretch reads NKCD. The tract at residues 174 to 176 is G5; the sequence is SAL.

Belongs to the TRAFAC class translation factor GTPase superfamily. Classic translation factor GTPase family. EF-Tu/EF-1A subfamily. As to quaternary structure, monomer.

The protein localises to the cytoplasm. It carries out the reaction GTP + H2O = GDP + phosphate + H(+). Functionally, GTP hydrolase that promotes the GTP-dependent binding of aminoacyl-tRNA to the A-site of ribosomes during protein biosynthesis. This chain is Elongation factor Tu, found in Buchnera aphidicola subsp. Schizaphis graminum (strain Sg).